Reading from the N-terminus, the 345-residue chain is Serine proteinase inhibitor 2 (345 aa).

Belongs to the serpin family. Poxviruses subfamily.

Its subcellular location is the host cytoplasm. Viral serpin that inhibits both cysteine and serine proteinases involved in the regulation of host inflammatory and apoptosis processes. Major anti-apoptotic protein which inhibits both intrinsic and extrinsic pathways and strongly cleaves host CASP1 and CASP8 but is a rather poor inhibitor of host CASP3. Prevents the proteolytic activity of host interleukin-1-beta converting enzyme (ICE) and ICE-like enzymes. Can also block apoptosis through host tumor necrosis factor (TNF) receptor. The inhibition of host ICE is an example of a 'cross-class' interaction, in which a serpin inhibits a non-serine proteinase. Also inhibits granzyme B. The protein is Serine proteinase inhibitor 2 (OPG199) of Rabbitpox virus (strain Utrecht) (RPV).